The primary structure comprises 1013 residues: Receptor-type tyrosine-protein phosphatase N2 (1013 aa).

The N-terminal stretch at 1-19 (MALPLLLLLLLLLPPRVLP) is a signal peptide. The interval 1 to 419 (MALPLLLLLL…PGALPFAKPL (419 aa)) is involved in localization to secretory granules; interaction with CPE. The Extracellular segment spans residues 20–613 (AAPSSVPHGR…QAEQEDSTKF (594 aa)). Disordered stretches follow at residues 116-137 (RHPE…ERRY), 273-302 (MPRP…TGEG), 342-382 (DHRG…VQDD), and 401-487 (LQDH…SLPA). Residues 419-430 (LKMERKKSERPE) are compositionally biased toward basic and acidic residues. Serine 434 and serine 435 each carry phosphoserine. A glycan (N-linked (GlcNAc...) asparagine) is linked at asparagine 562. Residues 614–634 (IALTLVSLACILGVLLASGLI) form a helical membrane-spanning segment. Topologically, residues 635 to 1013 (YCLRHSSQHR…VNAILKALPQ (379 aa)) are cytoplasmic. Positions 664-673 (YQELCRQRMA) match the Tyrosine-based internalization motif motif. The tract at residues 673 to 717 (ATRPPDRPEGPHTSRISSVSSQFSDGPMPSPSARSSASSWSEEPV) is disordered. A compositionally biased stretch (polar residues) spans 686 to 696 (SRISSVSSQFS). Serine 690 and serine 696 each carry phosphoserine. Low complexity predominate over residues 703–717 (PSARSSASSWSEEPV). The region spanning 743 to 1003 (LEKEWEALCA…EFALTAVAEE (261 aa)) is the Tyrosine-protein phosphatase domain. Substrate is bound by residues aspartate 911 and 943–949 (CSDGAGR). Catalysis depends on cysteine 943, which acts as the Phosphocysteine intermediate. Lysine 968 is subject to N6-acetyllysine. Glutamine 988 provides a ligand contact to substrate. Residues 1002–1008 (EEVNAIL) carry the Leucine-based sorting signal motif.

Belongs to the protein-tyrosine phosphatase family. Receptor class 8 subfamily. Self-associates. Interacts (via cytoplasmic domain) with PTPRN (via cytoplasmic domain). Interacts (precursor form) with CPE. Interacts with HAP1. Interacts with AP2A1 or AP2A2 and AP1G1; indicative for an association with adaptor protein complex 2 (AP-2) and adaptor protein complex 1 (AP-1). Interacts with AP2M1; indicative for an association with adaptor protein complex 2 (AP-2). Interacts with MYO5A. Post-translationally, subject to proteolytic cleavage at multiple sites. As to expression, detected in pancreatic islets and adrenal medulla.

The protein resides in the cytoplasmic vesicle. It localises to the secretory vesicle membrane. It is found in the secretory vesicle. The protein localises to the synaptic vesicle membrane. The enzyme catalyses O-phospho-L-tyrosyl-[protein] + H2O = L-tyrosyl-[protein] + phosphate. Functionally, plays a role in vesicle-mediated secretory processes. Required for normal accumulation of secretory vesicles in hippocampus, pituitary and pancreatic islets. Required for the accumulation of normal levels of insulin-containing vesicles and preventing their degradation. Plays a role in insulin secretion in response to glucose stimuli. Required for normal accumulation of the neurotransmitters norepinephrine, dopamine and serotonin in the brain. In females, but not in males, required for normal accumulation and secretion of pituitary hormones, such as luteinizing hormone (LH) and follicle-stimulating hormone (FSH). Required to maintain normal levels of renin expression and renin release. May regulate catalytic active protein-tyrosine phosphatases such as PTPRA through dimerization. Has phosphatidylinositol phosphatase activity; the PIPase activity is involved in its ability to regulate insulin secretion. Can dephosphorylate phosphatidylinositol 4,5-biphosphate, phosphatidylinositol 5-phosphate and phosphatidylinositol 3-phosphate. Regulates PI(4,5)P2 level in the plasma membrane and localization of cofilin at the plasma membrane and thus is indirectly involved in regulation of actin dynamics related to cell migration and metastasis; upon hydrolysis of PI(4,5)P2 cofilin is released from the plasma membrane and acts in the cytoplasm in severing F-actin filaments. This Macaca nemestrina (Pig-tailed macaque) protein is Receptor-type tyrosine-protein phosphatase N2 (PTPRN2).